A 296-amino-acid polypeptide reads, in one-letter code: MMHTVISAVANIWTAPDSPRPSDQFMLQPTVMIRDWLERMTYDERLGLCTDNVIQTQVLFGEKVLVTAEQGEWVSVIVPSQPSRKDPRGYPGWMKKYQLEKTKPIHTQHDVMISKPAAFLYRSNGEKEIELSFLTVLPLIAKENGYFKVSTVFGERFVRQSDAVPVSQQKGTAEDIIQTGAFFLGLPYLWGGISGFGFDCSGFMYSIFKANGYSIPRDAGDQAKAGKGVPLDDMKAGDLLFFAYEEGKGAIHHVGLYVGGGKMLHSPKTGKSIEILTLTETIYEKELCAVRRCFSE.

Residues tyrosine 90, 199-201 (DCS), and 218-219 (DA) contribute to the substrate site. One can recognise a NlpC/P60 domain in the interval 170-295 (KGTAEDIIQT…ELCAVRRCFS (126 aa)). Cysteine 200 (nucleophile) is an active-site residue. Histidine 253 (proton acceptor) is an active-site residue. Residue histidine 265 is part of the active site.

Belongs to the peptidase C40 family.

The catalysed reaction is The enzyme releases L-Ala-gamma-D-Glu dipeptides from cell wall peptides via cleavage of an L-Ala-gamma-D-Glu-|-L-Lys bond.. The protein operates within cell wall degradation; peptidoglycan degradation. Functionally, specifically hydrolyzes gamma-D-glutamyl-L-lysine bonds in murein peptides, releasing L-Ala-D-Glu. This chain is Gamma-D-glutamyl-L-lysine dipeptidyl-peptidase (ykfC), found in Bacillus subtilis (strain 168).